A 455-amino-acid polypeptide reads, in one-letter code: Anaerobic glycerol-3-phosphate dehydrogenase subunit B (455 aa).

It belongs to the anaerobic G-3-P dehydrogenase subunit B family. As to quaternary structure, composed of a catalytic GlpA/B dimer and of membrane bound GlpC. FMN is required as a cofactor.

It catalyses the reaction a quinone + sn-glycerol 3-phosphate = dihydroxyacetone phosphate + a quinol. It participates in polyol metabolism; glycerol degradation via glycerol kinase pathway; glycerone phosphate from sn-glycerol 3-phosphate (anaerobic route): step 1/1. In terms of biological role, conversion of glycerol 3-phosphate to dihydroxyacetone. Uses fumarate or nitrate as electron acceptor. The sequence is that of Anaerobic glycerol-3-phosphate dehydrogenase subunit B from Aliivibrio fischeri (strain ATCC 700601 / ES114) (Vibrio fischeri).